Consider the following 301-residue polypeptide: tRNA dimethylallyltransferase 2 (301 aa).

11–18 (GATASGKT) lines the ATP pocket. 13-18 (TASGKT) is a substrate binding site. The interaction with substrate tRNA stretch occupies residues 36-39 (DSRQ).

The protein belongs to the IPP transferase family. In terms of assembly, monomer. The cofactor is Mg(2+).

It carries out the reaction adenosine(37) in tRNA + dimethylallyl diphosphate = N(6)-dimethylallyladenosine(37) in tRNA + diphosphate. Its function is as follows. Catalyzes the transfer of a dimethylallyl group onto the adenine at position 37 in tRNAs that read codons beginning with uridine, leading to the formation of N6-(dimethylallyl)adenosine (i(6)A). This Shewanella sediminis (strain HAW-EB3) protein is tRNA dimethylallyltransferase 2.